The primary structure comprises 236 residues: Probable transcriptional regulatory protein UUR10_0292 (236 aa).

Belongs to the TACO1 family.

The protein localises to the cytoplasm. The protein is Probable transcriptional regulatory protein UUR10_0292 of Ureaplasma urealyticum serovar 10 (strain ATCC 33699 / Western).